We begin with the raw amino-acid sequence, 299 residues long: GTPase Era (299 aa).

The Era-type G domain maps to 4–171; it reads KSGFVAILGR…MEILKENLDE (168 aa). The interval 12-19 is G1; it reads GRPNVGKS. 12–19 serves as a coordination point for GTP; sequence GRPNVGKS. Positions 38–42 are G2; it reads QTTRN. The tract at residues 59–62 is G3; the sequence is DTPG. GTP is bound by residues 59–63 and 121–124; these read DTPGI and NKID. The segment at 121-124 is G4; sequence NKID. The G5 stretch occupies residues 150-152; the sequence is ISA. Residues 202 to 280 enclose the KH type-2 domain; sequence TREEIPHSVA…FLETWVKVKK (79 aa).

This sequence belongs to the TRAFAC class TrmE-Era-EngA-EngB-Septin-like GTPase superfamily. Era GTPase family. Monomer.

The protein localises to the cytoplasm. Its subcellular location is the cell membrane. An essential GTPase that binds both GDP and GTP, with rapid nucleotide exchange. Plays a role in 16S rRNA processing and 30S ribosomal subunit biogenesis and possibly also in cell cycle regulation and energy metabolism. The sequence is that of GTPase Era from Streptococcus suis (strain 98HAH33).